A 414-amino-acid chain; its full sequence is Gamma-glutamyl phosphate reductase (414 aa).

This sequence belongs to the gamma-glutamyl phosphate reductase family.

It localises to the cytoplasm. It catalyses the reaction L-glutamate 5-semialdehyde + phosphate + NADP(+) = L-glutamyl 5-phosphate + NADPH + H(+). It functions in the pathway amino-acid biosynthesis; L-proline biosynthesis; L-glutamate 5-semialdehyde from L-glutamate: step 2/2. Functionally, catalyzes the NADPH-dependent reduction of L-glutamate 5-phosphate into L-glutamate 5-semialdehyde and phosphate. The product spontaneously undergoes cyclization to form 1-pyrroline-5-carboxylate. The polypeptide is Gamma-glutamyl phosphate reductase (Xanthomonas oryzae pv. oryzae (strain MAFF 311018)).